Consider the following 71-residue polypeptide: Glucose-repressible gene protein (71 aa).

Positions 19-71 (TATASKEANKDVAKDSNQGVGTRLNAAGDAISDKVSENKHDAKAEAHKQGATH) are disordered. Positions 49–71 (ISDKVSENKHDAKAEAHKQGATH) are enriched in basic and acidic residues.

The protein is Glucose-repressible gene protein (grg-1) of Neurospora crassa (strain ATCC 24698 / 74-OR23-1A / CBS 708.71 / DSM 1257 / FGSC 987).